The following is a 124-amino-acid chain: Small ribosomal subunit protein uS12 (124 aa).

The disordered stretch occupies residues 8 to 28 (IRSAREKTDKKTKSPALKSCP). Residues 10–19 (SAREKTDKKT) show a composition bias toward basic and acidic residues. Position 89 is a 3-methylthioaspartic acid (aspartate 89).

It belongs to the universal ribosomal protein uS12 family. As to quaternary structure, part of the 30S ribosomal subunit. Contacts proteins S8 and S17. May interact with IF1 in the 30S initiation complex.

With S4 and S5 plays an important role in translational accuracy. Functionally, interacts with and stabilizes bases of the 16S rRNA that are involved in tRNA selection in the A site and with the mRNA backbone. Located at the interface of the 30S and 50S subunits, it traverses the body of the 30S subunit contacting proteins on the other side and probably holding the rRNA structure together. The combined cluster of proteins S8, S12 and S17 appears to hold together the shoulder and platform of the 30S subunit. The sequence is that of Small ribosomal subunit protein uS12 from Arthrospira platensis (Spirulina platensis).